The following is a 418-amino-acid chain: Arginine deiminase (418 aa).

Catalysis depends on Cys406, which acts as the Amidino-cysteine intermediate.

This sequence belongs to the arginine deiminase family.

It localises to the cytoplasm. It carries out the reaction L-arginine + H2O = L-citrulline + NH4(+). The protein operates within amino-acid degradation; L-arginine degradation via ADI pathway; carbamoyl phosphate from L-arginine: step 1/2. The protein is Arginine deiminase of Lentilactobacillus hilgardii (Lactobacillus hilgardii).